The primary structure comprises 1404 residues: DNA (cytosine-5)-methyltransferase 3 (1404 aa).

Over residues 1 to 10 the composition is skewed to basic residues; it reads MKTKAGKQKK. The interval 1–35 is disordered; that stretch reads MKTKAGKQKKRSVDSDDDVSRERRPKRATSGTNFK. A compositionally biased stretch (basic and acidic residues) spans 11–22; sequence RSVDSDDDVSRE. Lys-486 participates in a covalent cross-link: Glycyl lysine isopeptide (Lys-Gly) (interchain with G-Cter in ubiquitin). BAH domains are found at residues 614–748 and 788–929; these read RKMD…FSLP and IKYS…KKLP. Positions 969–1402 constitute an SAM-dependent MTase C5-type domain; sequence LATLDIFAGC…RKLKEALHLR (434 aa). Cys-1085 is an active-site residue.

The protein belongs to the class I-like SAM-binding methyltransferase superfamily. C5-methyltransferase family.

It is found in the nucleus. The enzyme catalyses a 2'-deoxycytidine in DNA + S-adenosyl-L-methionine = a 5-methyl-2'-deoxycytidine in DNA + S-adenosyl-L-homocysteine + H(+). In terms of biological role, maintains chromatin CpG methylation that plays a role in genomic imprinting, regulation of embryogenesis and seed viability. Required for proper patterns of CG DNA methylation in dividing cells. Required during the endosperm development in seeds. The polypeptide is DNA (cytosine-5)-methyltransferase 3 (MET3) (Arabidopsis thaliana (Mouse-ear cress)).